We begin with the raw amino-acid sequence, 286 residues long: MSVTIEAALKAATEQLQQSGSDSPALDAAVLLCHVLAKPRSYLLTWPDKILEKPTLASLELLLARRRAGEPMAYILGEREFWSLPLKVSPSTLIPRPDTERLVELALDKAALIDGELLDLGTGTGAIALALASELPTRQVTGIDLRPEAAELARENATRLAIHNAQFFQGSWFSPLADGTKFALIVSNPPYIEENDPHLSLGDVRFEPKSALVAAENGLADIRHISTHAPHFLLDGGWLLFEHGYDQGVAVRTILRDLGYQNIITEQDYAGHDRVTLGQYKTEREA.

Residues 121 to 125 (GTGTG), Asp-144, Trp-172, and Asn-188 each bind S-adenosyl-L-methionine. A substrate-binding site is contributed by 188-191 (NPPY).

Belongs to the protein N5-glutamine methyltransferase family. PrmC subfamily.

The catalysed reaction is L-glutaminyl-[peptide chain release factor] + S-adenosyl-L-methionine = N(5)-methyl-L-glutaminyl-[peptide chain release factor] + S-adenosyl-L-homocysteine + H(+). Functionally, methylates the class 1 translation termination release factors RF1/PrfA and RF2/PrfB on the glutamine residue of the universally conserved GGQ motif. This chain is Release factor glutamine methyltransferase, found in Vibrio cholerae serotype O1 (strain ATCC 39315 / El Tor Inaba N16961).